We begin with the raw amino-acid sequence, 579 residues long: Arginine--tRNA ligase (579 aa).

Residues 128–138 carry the 'HIGH' region motif; sequence PNLAKEMHVGH.

This sequence belongs to the class-I aminoacyl-tRNA synthetase family. In terms of assembly, monomer.

It localises to the cytoplasm. It catalyses the reaction tRNA(Arg) + L-arginine + ATP = L-arginyl-tRNA(Arg) + AMP + diphosphate. In Pseudomonas syringae pv. syringae (strain B728a), this protein is Arginine--tRNA ligase.